We begin with the raw amino-acid sequence, 816 residues long: Phosphatidylinositol 4-kinase beta (816 aa).

Disordered stretches follow at residues 1–30, 101–120, and 248–318; these read MGDTVVEPAPLKPTSEPTSGPPGNNGGSLL, EDEMGATVASGTAKGARRRR, and AHRK…SFSS. Gly-2 bears the N-acetylglycine mark. An interaction with ACBD3 region spans residues 2 to 68; it reads GDTVVEPAPL…VKLLHGGMAV (67 aa). A PIK helical domain is found at 52 to 242; that stretch reads CQDVLEKVKL…GTKLRKLILS (191 aa). The residue at position 258 (Ser-258) is a Phosphoserine. Phosphothreonine is present on Thr-263. Ser-266, Ser-275, Ser-277, Ser-284, and Ser-294 each carry phosphoserine. Composition is skewed to polar residues over residues 278–297 and 306–318; these read DATASISLSSNLKRTASNPK and SSSTESIDNSFSS. Phosphoserine is present on Ser-428. At Thr-438 the chain carries Phosphothreonine. Ser-511 is modified (phosphoserine). Thr-517 and Thr-519 each carry phosphothreonine. In terms of domain architecture, PI3K/PI4K catalytic spans 535–801; it reads EPWQEKVRRI…MVDGSMRSIT (267 aa). The tract at residues 541–547 is G-loop; sequence VRRIREG. Residues 668–676 are catalytic loop; the sequence is QVKDRHNGN. An activation loop region spans residues 687-711; the sequence is HIDFGFILSSSPRNLGFETSAFKLT.

The protein belongs to the PI3/PI4-kinase family. Type III PI4K subfamily. Interacts with ARF1 and ARF3 in the Golgi complex, but not with ARF4, ARF5 or ARF6. Interacts with NCS1/FREQ in a calcium-independent manner. Interacts with CALN1/CABP8 and CALN2/CABP7; in a calcium-dependent manner; this interaction competes with NCS1/FREQ binding. Interacts with ACBD3. Interacts with ARMH3, YWHAB, YWHAE, YWHAG, YWHAH, YWHAQ, YWHAZ and SFN. Interacts with GGA2 (via VHS domain); the interaction is important for PI4KB location at the Golgi apparatus membrane. Interacts with ATG9A. It depends on Mg(2+) as a cofactor. Requires Mn(2+) as cofactor.

It localises to the endomembrane system. The protein localises to the mitochondrion outer membrane. Its subcellular location is the rough endoplasmic reticulum membrane. It is found in the golgi apparatus. The protein resides in the golgi apparatus membrane. It carries out the reaction a 1,2-diacyl-sn-glycero-3-phospho-(1D-myo-inositol) + ATP = a 1,2-diacyl-sn-glycero-3-phospho-(1D-myo-inositol 4-phosphate) + ADP + H(+). Inhibited by wortmannin. Increased kinase activity upon interaction with NCS1/FREQ. In terms of biological role, phosphorylates phosphatidylinositol (PI) in the first committed step in the production of the second messenger inositol-1,4,5,-trisphosphate (PIP). May regulate Golgi disintegration/reorganization during mitosis, possibly via its phosphorylation. Involved in Golgi-to-plasma membrane trafficking. The sequence is that of Phosphatidylinositol 4-kinase beta (PI4KB) from Plecturocebus moloch (Dusky titi monkey).